Here is a 136-residue protein sequence, read N- to C-terminus: Large ribosomal subunit protein uL16 (136 aa).

The protein belongs to the universal ribosomal protein uL16 family. As to quaternary structure, part of the 50S ribosomal subunit.

In terms of biological role, binds 23S rRNA and is also seen to make contacts with the A and possibly P site tRNAs. This is Large ribosomal subunit protein uL16 from Edwardsiella ictaluri (strain 93-146).